Here is an 89-residue protein sequence, read N- to C-terminus: Small ribosomal subunit protein uS15 (89 aa).

Belongs to the universal ribosomal protein uS15 family. Part of the 30S ribosomal subunit. Forms a bridge to the 50S subunit in the 70S ribosome, contacting the 23S rRNA.

In terms of biological role, one of the primary rRNA binding proteins, it binds directly to 16S rRNA where it helps nucleate assembly of the platform of the 30S subunit by binding and bridging several RNA helices of the 16S rRNA. Its function is as follows. Forms an intersubunit bridge (bridge B4) with the 23S rRNA of the 50S subunit in the ribosome. In Laribacter hongkongensis (strain HLHK9), this protein is Small ribosomal subunit protein uS15.